The following is a 75-amino-acid chain: Protein CYSTEINE-RICH TRANSMEMBRANE MODULE 5 (75 aa).

The segment at 1 to 29 is disordered; that stretch reads MSQYSQNQYAGAYPTPPVSTGPYVAPPPL. Over residues 14 to 29 the composition is skewed to pro residues; that stretch reads PTPPVSTGPYVAPPPL. Residues 52-69 form a helical membrane-spanning segment; that stretch reads AADGFLKGCLATMLACCV.

It belongs to the CYSTM1 family. Heterodimers. Interacts with CYSTM7 and WIH1/CYSTM13. As to expression, mostly expressed in roots, stems, rosette leaves and siliques and, to a lower extent, in flowers and cauline leaves.

The protein localises to the cell membrane. Its subcellular location is the nucleus. Its function is as follows. Involved in resistance to abiotic stress. The polypeptide is Protein CYSTEINE-RICH TRANSMEMBRANE MODULE 5 (Arabidopsis thaliana (Mouse-ear cress)).